Here is a 425-residue protein sequence, read N- to C-terminus: CinA-like protein (425 aa).

This sequence belongs to the CinA family.

This Mycobacterium marinum (strain ATCC BAA-535 / M) protein is CinA-like protein.